The primary structure comprises 146 residues: Hemoglobin subunit beta (146 aa).

An N-acetylvaline modification is found at V1. The 145-residue stretch at 2 to 146 (HLTGEEKSAV…VANALAHKYH (145 aa)) folds into the Globin domain. Position 12 is a phosphothreonine (T12). Residue S44 is modified to Phosphoserine. N6-acetyllysine is present on K59. Residue H63 coordinates heme b. Residue K82 is modified to N6-acetyllysine. Residue H92 coordinates heme b. C93 carries the S-nitrosocysteine modification. Position 144 is an N6-acetyllysine (K144).

It belongs to the globin family. Heterotetramer of two alpha chains and two beta chains. In terms of tissue distribution, red blood cells.

Its function is as follows. Involved in oxygen transport from the lung to the various peripheral tissues. The chain is Hemoglobin subunit beta (HBB) from Phoca vitulina (Harbor seal).